The chain runs to 392 residues: NADH-quinone oxidoreductase subunit D (392 aa).

This sequence belongs to the complex I 49 kDa subunit family. As to quaternary structure, NDH-1 is composed of 14 different subunits. Subunits NuoB, C, D, E, F, and G constitute the peripheral sector of the complex.

The protein resides in the cell inner membrane. It catalyses the reaction a quinone + NADH + 5 H(+)(in) = a quinol + NAD(+) + 4 H(+)(out). Functionally, NDH-1 shuttles electrons from NADH, via FMN and iron-sulfur (Fe-S) centers, to quinones in the respiratory chain. The immediate electron acceptor for the enzyme in this species is believed to be ubiquinone. Couples the redox reaction to proton translocation (for every two electrons transferred, four hydrogen ions are translocated across the cytoplasmic membrane), and thus conserves the redox energy in a proton gradient. In Rhodospirillum rubrum (strain ATCC 11170 / ATH 1.1.1 / DSM 467 / LMG 4362 / NCIMB 8255 / S1), this protein is NADH-quinone oxidoreductase subunit D.